Reading from the N-terminus, the 251-residue chain is Insulin-induced gene 1 protein (251 aa).

Over 1–58 (MQTLEEHCWSCSCTRGRDKKGTKVSAWLARRVGKAMSSLNSLLSLAYSTLASSEGRSL) the chain is Cytoplasmic. Residues 59 to 81 (IQRSLVLFTVGVFLALVLNLLQI) traverse the membrane as a helical segment. Over 82–100 (QRNVTLFPEEVIATIFSSA) the chain is Extracellular. The helical transmembrane segment at 101 to 118 (WWVPPCCGTAAAVVGLLY) threads the bilayer. Topologically, residues 119-133 (PCIDSRIGEPHKFKR) are cytoplasmic. Residues 134 to 156 (EWASVMRCIAVFVGINHASAKLD) form a helical membrane-spanning segment. Over 157–159 (FAN) the chain is Extracellular. A helical transmembrane segment spans residues 160–178 (NVQLSLTLAALSLGLWWTF). The Cytoplasmic portion of the chain corresponds to 179–183 (DRSRS). A helical transmembrane segment spans residues 184–205 (GLGLGITIAFLATLITQFLVYN). At 206 to 219 (GVYQYTSPDFLYIR) the chain is on the extracellular side. Residues 220 to 237 (SWLPCIFFSGGVTVGNIG) form a helical membrane-spanning segment. The Cytoplasmic segment spans residues 238-251 (RQLAMGSSEKTHGD). The short motif at 245-251 (SEKTHGD) is the KxHxx element.

Belongs to the INSIG family. In terms of assembly, interacts with scap; interaction is direct and only takes place in the presence of sterols; it prevents interaction between scap and the coat protein complex II (COPII). Associates with the SCAP-SREBP complex; association is mediated via its interaction with scap and only takes place in the presence of sterols.

The protein resides in the endoplasmic reticulum membrane. Its function is as follows. Oxysterol-binding protein that mediates feedback control of cholesterol synthesis by controlling both endoplasmic reticulum to Golgi transport of scap and degradation of hmgcr. Acts as a negative regulator of cholesterol biosynthesis by mediating the retention of the SCAP-SREBP complex in the endoplasmic reticulum, thereby blocking the processing of sterol regulatory element-binding proteins (SREBPs). Binds oxysterol, including 25-hydroxycholesterol, regulating interaction with scap and retention of the SCAP-SREBP complex in the endoplasmic reticulum. In presence of oxysterol, interacts with scap, retaining the SCAP-SREBP complex in the endoplasmic reticulum, thereby preventing scap from escorting SREBPs to the Golgi. Sterol deprivation reduces oxysterol-binding, disrupting the interaction between insig1 and scap, thereby promoting Golgi transport of the SCAP-SREBP complex, followed by processing and nuclear translocation of SREBPs. Also regulates cholesterol synthesis by regulating degradation of hmgcr. The polypeptide is Insulin-induced gene 1 protein (Xenopus laevis (African clawed frog)).